Here is a 165-residue protein sequence, read N- to C-terminus: Cytochrome c-550-like protein (165 aa).

An N-terminal signal peptide occupies residues Met-1–Ala-30. The heme c site is built by Cys-75, Cys-78, His-79, and Cys-129.

This sequence belongs to the cytochrome c family. PsbV subfamily. The cofactor is heme c.

It is found in the cellular thylakoid membrane. Possible low-potential cytochrome c. The sequence is that of Cytochrome c-550-like protein (psbV2) from Trichodesmium erythraeum (strain IMS101).